The chain runs to 459 residues: uncharacterized protein (459 aa).

The 59-residue stretch at Lys6 to Arg64 folds into the TRAM domain. S-adenosyl-L-methionine-binding residues include Gln289, Tyr318, Glu339, and Asp387. Residue Cys414 is the Nucleophile of the active site.

It belongs to the class I-like SAM-binding methyltransferase superfamily. RNA M5U methyltransferase family.

This is an uncharacterized protein from Lactobacillus johnsonii (strain CNCM I-12250 / La1 / NCC 533).